Here is a 279-residue protein sequence, read N- to C-terminus: Putative pyruvate, phosphate dikinase regulatory protein (279 aa).

Residue 153–160 participates in ADP binding; it reads GVSRTSKT.

This sequence belongs to the pyruvate, phosphate/water dikinase regulatory protein family. PDRP subfamily.

It catalyses the reaction N(tele)-phospho-L-histidyl/L-threonyl-[pyruvate, phosphate dikinase] + ADP = N(tele)-phospho-L-histidyl/O-phospho-L-threonyl-[pyruvate, phosphate dikinase] + AMP + H(+). The enzyme catalyses N(tele)-phospho-L-histidyl/O-phospho-L-threonyl-[pyruvate, phosphate dikinase] + phosphate + H(+) = N(tele)-phospho-L-histidyl/L-threonyl-[pyruvate, phosphate dikinase] + diphosphate. Bifunctional serine/threonine kinase and phosphorylase involved in the regulation of the pyruvate, phosphate dikinase (PPDK) by catalyzing its phosphorylation/dephosphorylation. This is Putative pyruvate, phosphate dikinase regulatory protein from Rhodopseudomonas palustris (strain BisB5).